The chain runs to 323 residues: Serine/threonine-protein phosphatase PP1-gamma catalytic subunit (323 aa).

Ala2 is subject to N-acetylalanine. 4 residues coordinate Mn(2+): Asp64, His66, Asp92, and Asn124. Residue His125 is the Proton donor of the active site. Mn(2+) is bound by residues His173 and His248. A phosphothreonine mark is found at Thr307 and Thr311.

It belongs to the PPP phosphatase family. PP-1 subfamily. As to quaternary structure, PP1 comprises a catalytic subunit, PPP1CA, PPP1CB or PPP1CC, which is folded into its native form by inhibitor 2 and glycogen synthetase kinase 3, and then complexed to one or several targeting or regulatory subunits. PPP1R12A, PPP1R12B and PPP1R12C mediate binding to myosin. PPP1R3A (in skeletal muscle), PPP1R3B (in liver), PPP1R3C, PPP1R3D and PPP1R3F (in brain) mediate binding to glycogen. PPP1R15A and PPP1R15B mediate binding to EIF2S1. Part of a complex containing PPP1R15B, PP1 and NCK1/2. Interacts with PPP1R3B, PPP1R7 and CDCA2. Interacts with IKFZ1; the interaction targets PPP1CC to pericentromeric heterochromatin, dephosphorylates IKAROS, stabilizes it and prevents it from degradation. Interacts with NOM1 and PPP1R8. Component of the PTW/PP1 phosphatase complex, composed of PPP1R10/PNUTS, TOX4, WDR82, and PPP1CA or PPP1CB or PPP1CC. Interacts with PPP1R8. Interacts with NEK2. Interacts with PPP1R42; the interaction is direct. Interacts with URI1; the interaction is phosphorylation-dependent and occurs in a growth factor-dependent manner. Interacts with FOXP3. Interacts with TMEM225 (via RVxF motif). Interacts with MKI67. Interacts with RRP1B; this targets PPP1CC to the nucleolus. Interacts with DYNLT4. Interacts (via RVxF motif) with FIRRM; regulates PLK1 kinase activity. Interacts with the KNL1 complex subunit KNL1; the interaction is direct and mutually exclusive with KNL1 binding to microtubules. Component of the SHOC2-MRAS-PP1c (SMP) complex consisting of SHOC2, GTP-bound M-Ras/MRAS and the catalytic subunit of protein phosphatase 1 (either PPP1CA, PPP1CB or PPP1CC). SHOC2 and PP1c preferably bind M-Ras/MRAS, but they also bind K-Ras/KRAS, N-Ras/NRAS and H-Ras/HRAS; these interactions are GTP-dependent and both SHOC2 and PP1c are required to form a stable complex. Interacts with SHOC2 in the absence of Ras GTPases. Mn(2+) serves as cofactor. Phosphorylated by NEK2.

It localises to the cytoplasm. Its subcellular location is the nucleus. The protein localises to the cleavage furrow. It is found in the nucleolus. The protein resides in the nucleoplasm. It localises to the chromosome. Its subcellular location is the centromere. The protein localises to the kinetochore. It is found in the nucleus speckle. The protein resides in the midbody. It localises to the mitochondrion. Its subcellular location is the cytoskeleton. The protein localises to the microtubule organizing center. The enzyme catalyses O-phospho-L-seryl-[protein] + H2O = L-seryl-[protein] + phosphate. The catalysed reaction is O-phospho-L-threonyl-[protein] + H2O = L-threonyl-[protein] + phosphate. Its activity is regulated as follows. Inactivated by binding to URI1. Protein phosphatase that associates with over 200 regulatory proteins to form highly specific holoenzymes which dephosphorylate hundreds of biological targets. Protein phosphatase 1 (PP1) is essential for cell division, and participates in the regulation of glycogen metabolism, muscle contractility and protein synthesis. Dephosphorylates RPS6KB1. Involved in regulation of ionic conductances and long-term synaptic plasticity. May play an important role in dephosphorylating substrates such as the postsynaptic density-associated Ca(2+)/calmodulin dependent protein kinase II. Component of the PTW/PP1 phosphatase complex, which plays a role in the control of chromatin structure and cell cycle progression during the transition from mitosis into interphase. Regulates the recruitment of the SKA complex to kinetochores. Core component of the SHOC2-MRAS-PP1c (SMP) holophosphatase complex that regulates the MAPK pathway activation. Dephosphorylates MKI67 at the onset of anaphase. The SMP complex specifically dephosphorylates the inhibitory phosphorylation at 'Ser-259' of RAF1 kinase, 'Ser-365' of BRAF kinase and 'Ser-214' of ARAF kinase, stimulating their kinase activities. The SMP complex enhances the dephosphorylation activity and substrate specificity of PP1c. This chain is Serine/threonine-protein phosphatase PP1-gamma catalytic subunit (PPP1CC), found in Canis lupus familiaris (Dog).